The sequence spans 184 residues: Helix-loop-helix protein ngn-1 (184 aa).

Residues 1–55 (MYHHSPFYPHHLQTGEQDLDMERENDMDQNSKNSTQKPVKREKRRYRCRKRSPAT) form a disordered region. Residues 28–37 (DQNSKNSTQK) show a composition bias toward polar residues. Over residues 38-52 (PVKREKRRYRCRKRS) the composition is skewed to basic residues. The interval 62–75 (VRRDKANARERRRM) is basic motif. Residues 62 to 114 (VRRDKANARERRRMNSLNDALEHLRGILPALPDEPKMTKIETLRKAQEYIASL) enclose the bHLH domain. Residues 76-114 (NSLNDALEHLRGILPALPDEPKMTKIETLRKAQEYIASL) form a helix-loop-helix motif region. The disordered stretch occupies residues 164–184 (SNPPSQMYYHHHHQSPSFPHH). Residues 172–184 (YHHHHQSPSFPHH) are compositionally biased toward basic residues.

Interacts with hlh-2; the interaction is direct.

The protein localises to the nucleus. In terms of biological role, acts as a transcriptional regulator. Regulates expression of various genes, including homeobox protein unc-42 and helix-loop-helix protein hlh-34. Required for embryonic viability, neuromuscular development, organization of the nerve ring and neuronal cell body location. Regulates AIY neuron axon morphology and cell fate. Plays a role in cell autonomously establishing a neuronal left-right asymmetry. Involved in regulating glial specification. The polypeptide is Helix-loop-helix protein ngn-1 (Caenorhabditis elegans).